The primary structure comprises 160 residues: Eosinophil cationic protein (160 aa).

An N-terminal signal peptide occupies residues 1–27; it reads MVPKLFTSQICLLLLLGLMGVEGSLHA. The required for nearly all of the bactericidal activity; partially involved in LPS-binding and bacterial membrane depolarization stretch occupies residues 28–72; the sequence is RPPQFTRAQWFAIQHISLNPPRCTIAMRAINNYRWRCKNQNTFLR. The active-site Proton acceptor is the His42. 4 cysteine pairs are disulfide-bonded: Cys50/Cys110, Cys64/Cys123, Cys82/Cys138, and Cys89/Cys98. 3'-nitrotyrosine is present on Tyr60. 65-69 contributes to the substrate binding site; that stretch reads KNQNT. N-linked (GlcNAc...) asparagine glycans are attached at residues Asn84, Asn92, and Asn119. His155 functions as the Proton donor in the catalytic mechanism.

This sequence belongs to the pancreatic ribonuclease family. As to quaternary structure, interacts with bacterial lipopolysaccharide (LPS) and lipoteichoic acid (LTA). In vitro interacts with and insert into lipid bilayers composed of dioleoyl phosphatidylcholine and dioleoyl phosphatidylglycerol. In vitro, tends to form amyloid-like aggregates at pH 3, but not at pH 5, nor 7.

It is found in the secreted. Functionally, cytotoxin and helminthotoxin with low-efficiency ribonuclease activity. Possesses a wide variety of biological activities. Exhibits antibacterial activity, including cytoplasmic membrane depolarization of preferentially Gram-negative, but also Gram-positive strains. Promotes E.coli outer membrane detachment, alteration of the overall cell shape and partial loss of cell content. The chain is Eosinophil cationic protein (RNASE3) from Homo sapiens (Human).